Reading from the N-terminus, the 296-residue chain is 4-hydroxybenzoate octaprenyltransferase (296 aa).

A run of 8 helical transmembrane segments spans residues 29–49 (AGWL…AGGF), 52–72 (WHLL…GCCI), 103–123 (LVLG…TNAI), 151–171 (VLGV…LGEV), 176–196 (WLLM…YAMV), 220–240 (VILL…MPYV), 243–263 (ALFT…YTLI), and 275–295 (FRLN…SYAL).

Belongs to the UbiA prenyltransferase family. Requires Mg(2+) as cofactor.

The protein localises to the cell inner membrane. The enzyme catalyses all-trans-octaprenyl diphosphate + 4-hydroxybenzoate = 4-hydroxy-3-(all-trans-octaprenyl)benzoate + diphosphate. It functions in the pathway cofactor biosynthesis; ubiquinone biosynthesis. Functionally, catalyzes the prenylation of para-hydroxybenzoate (PHB) with an all-trans polyprenyl group. Mediates the second step in the final reaction sequence of ubiquinone-8 (UQ-8) biosynthesis, which is the condensation of the polyisoprenoid side chain with PHB, generating the first membrane-bound Q intermediate 3-octaprenyl-4-hydroxybenzoate. The protein is 4-hydroxybenzoate octaprenyltransferase of Albidiferax ferrireducens (strain ATCC BAA-621 / DSM 15236 / T118) (Rhodoferax ferrireducens).